A 245-amino-acid polypeptide reads, in one-letter code: tRNA pseudouridine synthase A (245 aa).

Aspartate 52 (nucleophile) is an active-site residue. Tyrosine 111 provides a ligand contact to substrate.

The protein belongs to the tRNA pseudouridine synthase TruA family. In terms of assembly, homodimer.

It carries out the reaction uridine(38/39/40) in tRNA = pseudouridine(38/39/40) in tRNA. Its function is as follows. Formation of pseudouridine at positions 38, 39 and 40 in the anticodon stem and loop of transfer RNAs. This is tRNA pseudouridine synthase A from Rickettsia felis (strain ATCC VR-1525 / URRWXCal2) (Rickettsia azadi).